We begin with the raw amino-acid sequence, 137 residues long: Large ribosomal subunit protein uL16 (137 aa).

Over residues 1–13 the composition is skewed to basic residues; it reads MLQPSRRKYRKEQ. Residues 1–22 are disordered; it reads MLQPSRRKYRKEQKGRNTGLAT.

It belongs to the universal ribosomal protein uL16 family. As to quaternary structure, part of the 50S ribosomal subunit.

In terms of biological role, binds 23S rRNA and is also seen to make contacts with the A and possibly P site tRNAs. The polypeptide is Large ribosomal subunit protein uL16 (Azoarcus sp. (strain BH72)).